The following is a 166-amino-acid chain: UPF0303 protein Avin_29320 (166 aa).

Belongs to the UPF0303 family.

The chain is UPF0303 protein Avin_29320 from Azotobacter vinelandii (strain DJ / ATCC BAA-1303).